Reading from the N-terminus, the 423-residue chain is Large ribosomal subunit protein mL37 (423 aa).

The N-terminal 29 residues, M1–G29, are a transit peptide targeting the mitochondrion.

It belongs to the mitochondrion-specific ribosomal protein mL37 family. Component of the mitochondrial large ribosomal subunit (mt-LSU). Mature mammalian 55S mitochondrial ribosomes consist of a small (28S) and a large (39S) subunit. The 28S small subunit contains a 12S ribosomal RNA (12S mt-rRNA) and 30 different proteins. The 39S large subunit contains a 16S rRNA (16S mt-rRNA), a copy of mitochondrial valine transfer RNA (mt-tRNA(Val)), which plays an integral structural role, and 52 different proteins. mL37 forms a heterodimer with mL65.

It is found in the mitochondrion. The chain is Large ribosomal subunit protein mL37 (MRPL37) from Homo sapiens (Human).